Consider the following 341-residue polypeptide: Paired box protein Pax-9 (341 aa).

The paired DNA-binding region spans 4–130 (AFGEVNQLGG…SSISRILRNK (127 aa)). The interval 7–63 (EVNQLGGVFVNGRPLPNAIRLRIVELAQLGIRPCDISRQLRVSHGCVSKILARYNET) is PAI subdomain. Positions 82 to 130 (TVVKHIRTYKQRDPGIFAWEIRDRLLADGVCDKYNVPSVSSISRILRNK) are RED subdomain. The interaction with KDM5B stretch occupies residues 168-189 (AAAAKVPTPPGVPAIPGSVAMP).

In terms of assembly, interacts with KDM5B.

The protein localises to the nucleus. Transcription factor required for normal development of thymus, parathyroid glands, ultimobranchial bodies, teeth, skeletal elements of skull and larynx as well as distal limbs. This Perodicticus potto edwarsi (Potto) protein is Paired box protein Pax-9 (PAX9).